Reading from the N-terminus, the 257-residue chain is UPF0246 protein lpl1317 (257 aa).

It belongs to the UPF0246 family.

This Legionella pneumophila (strain Lens) protein is UPF0246 protein lpl1317.